Consider the following 143-residue polypeptide: Ayaconin (143 aa).

An N-terminal signal peptide occupies residues Met1–Ala22.

As to quaternary structure, interacts with human F12 (inactive). As to expression, salivary gland.

It localises to the secreted. In terms of biological role, inhibits the intrinsic blood coagulation pathway in the host by blocking activation of host coagulation factor XII (F12). This Lutzomyia ayacuchensis (Sand fly) protein is Ayaconin.